Consider the following 86-residue polypeptide: Large ribosomal subunit protein uL23 (86 aa).

This sequence belongs to the universal ribosomal protein uL23 family. Part of the 50S ribosomal subunit. Contacts protein L29.

Binds to 23S rRNA. One of the proteins that surrounds the polypeptide exit tunnel on the outside of the ribosome. The protein is Large ribosomal subunit protein uL23 of Methanobrevibacter smithii (strain ATCC 35061 / DSM 861 / OCM 144 / PS).